A 349-amino-acid polypeptide reads, in one-letter code: Histidinol-phosphate aminotransferase (349 aa).

A disordered region spans residues 1–22 (MVSIRPSVRHTPAYVPGEQPQT). At Lys-207 the chain carries N6-(pyridoxal phosphate)lysine.

Belongs to the class-II pyridoxal-phosphate-dependent aminotransferase family. Histidinol-phosphate aminotransferase subfamily. Homodimer. Requires pyridoxal 5'-phosphate as cofactor.

The catalysed reaction is L-histidinol phosphate + 2-oxoglutarate = 3-(imidazol-4-yl)-2-oxopropyl phosphate + L-glutamate. Its pathway is amino-acid biosynthesis; L-histidine biosynthesis; L-histidine from 5-phospho-alpha-D-ribose 1-diphosphate: step 7/9. This is Histidinol-phosphate aminotransferase (hisC) from Synechocystis sp. (strain ATCC 27184 / PCC 6803 / Kazusa).